A 1417-amino-acid polypeptide reads, in one-letter code: MNNGILHQNYNSKKFDIIKISLASPEVIRSWSHGEVKKPETINYRTFKPERDGLFCAKIFGPIKDYECLCGKYKRLKHRGVVCERCGVEVEQAKVRRERMGHIDLVCPVVHIWYLKSLPSRIGLFLDMPLKNVEKVLYFESYIVTDPGMTPLEKKQLLTDEEYAEALENYGYEFEASMGAEAIRDLLADTDIESEIELLQAECEESKSTAKKEKAIKRLRLLETFQASGNKPEWMVMTVLPVLPPDLRPLVPIEGGRFATSDLNDLYRRVINRNNRLKKLLDLNAPDIIVRNEKRMLQEAVDALLDNGRRGRAVTGSNKRPLKSLADMIKGKQGRFRQNLLGKRVDYSGRSVITVGPSLRLHECGLPKKMALELFKPFVYSKLRLGGHATTIKQAKRMVELEEAVVWDILETVINEHPVLLNRAPTLHRLGIQAFEPRLIEGKAIQLHPLVCAAFNADFDGDQMAVHVPLTVESQLEARVLMMSTNNILSPASGQPIITPTQDIVLGLYYITREKEGARGEGKLFSSYEDVSRAYNSGTIDIHAKIKLRIDRQVFDTKGNTYNEKGVVNTTVGRALLLNILPEGLSFSLLNKVLVKKEISKIINQAFRVLGGKATVVLADKLMYAGFKYSTLSGVSVGVDDMTIPDNKEAKIEEAEKEIKQITEQYQSSLITENERYNNIINIWSKTSDEVGASMMDAISKDTVSINGEKKEIESFNSVYMMAKSGARGSYNQMRQLAGMRGLMAKPDGTMIETAITANFREGLSVLQYFTSTHGARKGLADTALKTANAGYLTRRLVDVAQDLVVIEEDCGTDDGLMFSAIVEDGEVKVPLVERALGRTLAADVVTEKGVVLLEAGTLLDENLVELLDDNGIDMIKVRSPITCKTRRGLCAKCYGRDLARERQVNVGESVGVIAAQSIGEPGTQLTMRTFHTGGAASLGITVSDIKVKTAGKIKFKNIRTVTNKEGQEIVISRAGEIIVSDTMGRVREQHKIPMGAVVPLASGKAVEIGDVIATWDPHAQPLITDVAGKVVLEDVIDGITSKHTYDDLTGQQTIEITSISQRTTSKNLKPVVKIVDEKGAELKSIPLAVGAVLNVADDSILEVGDIVAKIPLEGSKNKDITGGLPRVAELFEARRPKDAAILSPCDGMVRLGNRDTKEKQRIEIIDKNGHIVEEILLPKSRHLVVFDGEQVSRGDVLADGPTDPHDLLKYKGLEEFADYILIEAQSVYRMQGVVINDKHIETIVRQMLRKAVILDEGDSKFVKDESIELVRILEENDKLRKQGKKEVEYELVLMGITRSSLSTESFLSAASFQETTRVLTEASINSQIDNLRGLKENVLIGRLIPTGTGLAVRKESAKIEKMREELGVEDNMVFTDLSSFNPEEISFDSIQSQKEDKDINEDIEESLRNALESLDF.

Zn(2+)-binding residues include C68, C70, C83, and C86. Mg(2+) contacts are provided by D458, D460, and D462. Zn(2+) is bound by residues C811, C884, C891, and C894.

Belongs to the RNA polymerase beta' chain family. As to quaternary structure, the RNAP catalytic core consists of 2 alpha, 1 beta, 1 beta' and 1 omega subunit. When a sigma factor is associated with the core the holoenzyme is formed, which can initiate transcription. Mg(2+) is required as a cofactor. The cofactor is Zn(2+).

It carries out the reaction RNA(n) + a ribonucleoside 5'-triphosphate = RNA(n+1) + diphosphate. Functionally, DNA-dependent RNA polymerase catalyzes the transcription of DNA into RNA using the four ribonucleoside triphosphates as substrates. The polypeptide is DNA-directed RNA polymerase subunit beta' (Francisella tularensis subsp. tularensis (strain FSC 198)).